The primary structure comprises 332 residues: MQTGSTLHDDRTSVSALGGLGARARGASGRLLPEIWMQNGAKRVEQALARLLCAEDHGETELMAAMRYATLHGGKRTRALLCLAAGALADTPAHILDDVGAAIEMMHACTLVHDDLPAMDDDVLRRGLPTVHVKFGEATAILVGDALQAHAFLTLASLDAPGDNRIALVRELAQAVSAEGAAGGQAMDLSLVGKHVELDRIVAMHRMKCGALVRASVRMGALCAIAEDAADATLYCALDHYSACFGLALQVVDDILDATADTATLGKTPGKDAAAQKPTCASIMGLQAARQFALDLLCEAGEAIAPLGPRAERLAQMLQRASAYLFKHAPSA.

The isopentenyl diphosphate site is built by K75, R78, and H107. Positions 114 and 120 each coordinate Mg(2+). R125 provides a ligand contact to (2E)-geranyl diphosphate. R126 serves as a coordination point for isopentenyl diphosphate. Residues K208, Q250, and K267 each contribute to the (2E)-geranyl diphosphate site.

Belongs to the FPP/GGPP synthase family. Requires Mg(2+) as cofactor.

The protein localises to the cytoplasm. The enzyme catalyses isopentenyl diphosphate + (2E)-geranyl diphosphate = (2E,6E)-farnesyl diphosphate + diphosphate. This Sinorhizobium fredii (strain NBRC 101917 / NGR234) protein is Probable farnesyl diphosphate synthase.